The sequence spans 172 residues: ATP synthase subunit b (172 aa).

Residues 11-30 (LIAQIINFVIVLWVLNRFAF) traverse the membrane as a helical segment.

This sequence belongs to the ATPase B chain family. F-type ATPases have 2 components, F(1) - the catalytic core - and F(0) - the membrane proton channel. F(1) has five subunits: alpha(3), beta(3), gamma(1), delta(1), epsilon(1). F(0) has three main subunits: a(1), b(2) and c(10-14). The alpha and beta chains form an alternating ring which encloses part of the gamma chain. F(1) is attached to F(0) by a central stalk formed by the gamma and epsilon chains, while a peripheral stalk is formed by the delta and b chains.

Its subcellular location is the cell inner membrane. F(1)F(0) ATP synthase produces ATP from ADP in the presence of a proton or sodium gradient. F-type ATPases consist of two structural domains, F(1) containing the extramembraneous catalytic core and F(0) containing the membrane proton channel, linked together by a central stalk and a peripheral stalk. During catalysis, ATP synthesis in the catalytic domain of F(1) is coupled via a rotary mechanism of the central stalk subunits to proton translocation. Functionally, component of the F(0) channel, it forms part of the peripheral stalk, linking F(1) to F(0). The chain is ATP synthase subunit b from Methylacidiphilum infernorum (isolate V4) (Methylokorus infernorum (strain V4)).